The sequence spans 209 residues: Small ribosomal subunit protein uS4 (209 aa).

Positions 23–46 (SRNPLLKKPHPPGQHGMQRKKKSD) are disordered. The 64-residue stretch at 93-156 (CRLDNMVYRM…RKLQSVQESL (64 aa)) folds into the S4 RNA-binding domain.

Belongs to the universal ribosomal protein uS4 family. As to quaternary structure, part of the 30S ribosomal subunit. Contacts protein S5. The interaction surface between S4 and S5 is involved in control of translational fidelity.

Its function is as follows. One of the primary rRNA binding proteins, it binds directly to 16S rRNA where it nucleates assembly of the body of the 30S subunit. With S5 and S12 plays an important role in translational accuracy. The protein is Small ribosomal subunit protein uS4 of Chlamydia felis (strain Fe/C-56) (Chlamydophila felis).